Reading from the N-terminus, the 378-residue chain is DGISLEDLLEKRTGNMMQPQLAEKIAKATRKEFVDGIAAHGTDALRFTLAALASNGRDINWDMKRLEGYRNFCNKLWNASRFVLTNDKLDLSQGEIEFSVADRWIQSEFNRTVESFRSALSQYRFDLCANAIYEFTWNQFCDWYLELTKPVFANGNAAQIRAASQTLVHVLEKLLRLAHPLIPFITEEIWQKVKGFVGITADSIMLQPFPQVEENGFDPEAEAEIEWLKEVIVAVRNIRAESNIAPSKGLDLLFRNLSAENAKILEKQTALLKAMAKLDNVQVLAANETHASVAKLVGNAELLVPMAGFINKEAELARLTKEIEKYQNEVKRIENKLSNEAFVAKAPKAVITKEREKQAEYQSGLEKIQEQYKAIEAL.

Positions 307–377 (AGFINKEAEL…IQEQYKAIEA (71 aa)) form a coiled coil.

The protein belongs to the class-I aminoacyl-tRNA synthetase family. ValS type 1 subfamily. In terms of assembly, monomer.

It localises to the cytoplasm. It catalyses the reaction tRNA(Val) + L-valine + ATP = L-valyl-tRNA(Val) + AMP + diphosphate. Its function is as follows. Catalyzes the attachment of valine to tRNA(Val). As ValRS can inadvertently accommodate and process structurally similar amino acids such as threonine, to avoid such errors, it has a 'posttransfer' editing activity that hydrolyzes mischarged Thr-tRNA(Val) in a tRNA-dependent manner. This is Valine--tRNA ligase (valS) from Haemophilus parainfluenzae.